The following is a 131-amino-acid chain: Colicin-N immunity protein (131 aa).

2 helical membrane-spanning segments follow: residues 66-84 and 104-124; these read ILTP…FLLT and VFVF…IFVL.

It localises to the cell membrane. This Escherichia coli protein is Colicin-N immunity protein (cni).